The chain runs to 252 residues: MGTVSETSKEQFVKKNKLAICAILRDLQKNDTAVMVTHARGQFISRILDIQPETNQFIFDFGSVENENVLALGAEQLTIIVEPTGAKIEFTCNKLKHVEYLSLPAFSSAIPEQLYFIQRREYFRVSIPQWPAYYCSGKFPDGTQYKYTLADISLGGMGLYAMKGSEFPLQGCSVLRDAAVDLCGFGLFKLDLQFIRALDKQVVNNKGETLTVQRLSFKFLRLSPIQEKGLQRAIFELEKQQTAKARKFQEGL.

In terms of domain architecture, PilZ spans 118 to 236; sequence QRREYFRVSI…EKGLQRAIFE (119 aa).

It belongs to the YcgR family. As to quaternary structure, monomer. Interacts with the flagellar basal bodies.

It localises to the bacterial flagellum basal body. Functionally, acts as a flagellar brake, regulating swimming and swarming in a bis-(3'-5') cyclic diguanylic acid (c-di-GMP)-dependent manner. Binds 1 c-di-GMP dimer per subunit. Increasing levels of c-di-GMP lead to decreased motility. This is Flagellar brake protein YcgR from Yersinia pseudotuberculosis serotype I (strain IP32953).